The primary structure comprises 308 residues: Ribosomal RNA small subunit methyltransferase H (308 aa).

S-adenosyl-L-methionine is bound by residues 32-34 (GGH), D52, F78, D100, and Q107.

The protein belongs to the methyltransferase superfamily. RsmH family.

It is found in the cytoplasm. The enzyme catalyses cytidine(1402) in 16S rRNA + S-adenosyl-L-methionine = N(4)-methylcytidine(1402) in 16S rRNA + S-adenosyl-L-homocysteine + H(+). Specifically methylates the N4 position of cytidine in position 1402 (C1402) of 16S rRNA. The protein is Ribosomal RNA small subunit methyltransferase H of Legionella pneumophila (strain Corby).